A 480-amino-acid polypeptide reads, in one-letter code: Endothelial transcription factor GATA-2 (480 aa).

Residue S73 is modified to Phosphoserine. The residue at position 86 (R86) is an Asymmetric dimethylarginine. The disordered stretch occupies residues 166–208; that stretch reads SGSHLFGFPPTPPKEVSPDPSTTGAASPASSSAGGSVARGEDK. The segment covering 183 to 201 has biased composition (low complexity); the sequence is PDPSTTGAASPASSSAGGS. Phosphoserine is present on S192. GATA-type zinc fingers lie at residues 295–319 and 349–373; these read CVNC…CNAC and CANC…CNAC. K389 participates in a covalent cross-link: Glycyl lysine isopeptide (Lys-Gly) (interchain with G-Cter in SUMO2). Residues 457–480 form a disordered region; sequence TPIHPSSSLSFGHPHPSSMVTAMG.

Interacts with BRD3. Interacts with AR and CCAR1. Interacts with MDFIC.

The protein localises to the nucleus. Functionally, transcriptional activator which regulates endothelin-1 gene expression in endothelial cells. Binds to the consensus sequence 5'-AGATAG-3'. The protein is Endothelial transcription factor GATA-2 (Gata2) of Mus musculus (Mouse).